The following is a 124-amino-acid chain: Small ribosomal subunit protein uS13 (124 aa).

Residues 94–124 (GLPLRGQRTKNNSRTRKGKRKTVANKKKATK) form a disordered region. Basic residues predominate over residues 100–124 (QRTKNNSRTRKGKRKTVANKKKATK).

It belongs to the universal ribosomal protein uS13 family. In terms of assembly, part of the 30S ribosomal subunit. Forms a loose heterodimer with protein S19. Forms two bridges to the 50S subunit in the 70S ribosome.

Located at the top of the head of the 30S subunit, it contacts several helices of the 16S rRNA. In the 70S ribosome it contacts the 23S rRNA (bridge B1a) and protein L5 of the 50S subunit (bridge B1b), connecting the 2 subunits; these bridges are implicated in subunit movement. Contacts the tRNAs in the A and P-sites. The sequence is that of Small ribosomal subunit protein uS13 from Flavobacterium johnsoniae (strain ATCC 17061 / DSM 2064 / JCM 8514 / BCRC 14874 / CCUG 350202 / NBRC 14942 / NCIMB 11054 / UW101) (Cytophaga johnsonae).